Consider the following 2554-residue polypeptide: Highly reducing polyketide synthase PKS6 (2554 aa).

Residues 1–48 (MGSLSAVPATNGNHAALNGSASTNGQHVNGSTHVNGNHSLNGSAQVNG) form a disordered region. Residues 8-48 (PATNGNHAALNGSASTNGQHVNGSTHVNGNHSLNGSAQVNG) show a composition bias toward polar residues. Positions 56-481 (LEPIAVVGMS…GTNAHVVVDA (426 aa)) constitute a Ketosynthase family 3 (KS3) domain. Active-site for beta-ketoacyl synthase activity residues include C230, H367, and H407. The segment at 595-913 (VFSGQGAQYP…HYTGSLKRGE (319 aa)) is malonyl-CoA:ACP transacylase (MAT) domain. The segment at 981-1119 (HELLGTLVHD…GLVQVILKSE (139 aa)) is N-terminal hotdog fold. The segment at 981 to 1281 (HELLGTLVHD…QAWGVVATKL (301 aa)) is dehydratase (DH) domain. The PKS/mFAS DH domain maps to 981–1287 (HELLGTLVHD…ATKLPDVSIG (307 aa)). H1013 (proton acceptor; for dehydratase activity) is an active-site residue. Residues 1137-1287 (AQHIPANQFY…ATKLPDVSIG (151 aa)) are C-terminal hotdog fold. Residue D1200 is the Proton donor; for dehydratase activity of the active site. Residues 1451-1556 (VEVGAGTGSA…KTMLRPGGKL (106 aa)) form a methyltransferase (CMet) domain region. Positions 1840 to 2153 (GVLDTIRWVD…AGKHTGKVIL (314 aa)) are enoyl reductase (ER) domain. The tract at residues 2177–2353 (ATYLVVGGLG…TAYAVNIGAI (177 aa)) is ketoreductase (KR) domain. Positions 2457–2534 (EAQDIICDAI…ELAEIVTKGS (78 aa)) constitute a Carrier domain. Residue S2494 is modified to O-(pantetheine 4'-phosphoryl)serine.

It functions in the pathway secondary metabolite biosynthesis. Highly reducing polyketide synthase; part of the gene cluster that mediates the biosynthesis of the lipopeptide fusaristatin A. Fusaristatin A consists of a polyketide chain linked to three amino acid residues glutamine (Gln), dehydroalanine (dehydro-Ala), and beta-aminoisobutyric acid. The biosynthesis starts with formation of a linear polyketide chain by the highly reducing polyketide synthase PKS6. The gene cluster does not contain an acyl-CoA ligase or an acyl-transferase, and it is therefore predicted that the polyketide is transferred directly to the nonribosomal peptide synthetase NRPS7. Modules 1-3 from NRPS7 incorporate dehydro-Ala, Gln, and beta-aminoisobutyric acid in the compound, which is released by cyclization. The beta-aminoisobutyric acid units are most likely not freely available to the NRPS, but can be synthesized from thymine, which requires a dehydrogenase, a monooxygenase, and an aminotransferase. The fusaristatin A cluster contains a cytochrome P450 monooxygenase (FGSG_08207) and an aminotransferase (FGSG_17085), which theoretically can perform two of the enzymatic steps. The enzymes may however also be involved in biosynthesis of dehydroalanine or modification of the polyketide. The dehydro-Ala residue can be a result of cyclization, where serine is dehydrated. The last gene of the cluster encodes a protein with an A/B barrel domain found in variable enzymes, which hampers functional prediction. The sequence is that of Highly reducing polyketide synthase PKS6 from Gibberella zeae (strain ATCC MYA-4620 / CBS 123657 / FGSC 9075 / NRRL 31084 / PH-1) (Wheat head blight fungus).